Reading from the N-terminus, the 545-residue chain is Phenylalanine--tRNA ligase beta subunit (545 aa).

Positions 268–343 constitute a B5 domain; it reads FLHKIQNVRE…MSIGYNNLEP (76 aa). Asp321, Asp327, Glu330, and Asp331 together coordinate Mg(2+).

The protein belongs to the phenylalanyl-tRNA synthetase beta subunit family. Type 2 subfamily. As to quaternary structure, tetramer of two alpha and two beta subunits. It depends on Mg(2+) as a cofactor.

Its subcellular location is the cytoplasm. It catalyses the reaction tRNA(Phe) + L-phenylalanine + ATP = L-phenylalanyl-tRNA(Phe) + AMP + diphosphate + H(+). The chain is Phenylalanine--tRNA ligase beta subunit from Saccharolobus islandicus (strain M.14.25 / Kamchatka #1) (Sulfolobus islandicus).